A 146-amino-acid chain; its full sequence is Endoribonuclease YbeY (146 aa).

Residues His-108, His-112, and His-118 each contribute to the Zn(2+) site.

Belongs to the endoribonuclease YbeY family. The cofactor is Zn(2+).

Its subcellular location is the cytoplasm. Functionally, single strand-specific metallo-endoribonuclease involved in late-stage 70S ribosome quality control and in maturation of the 3' terminus of the 16S rRNA. The protein is Endoribonuclease YbeY of Onion yellows phytoplasma (strain OY-M).